Reading from the N-terminus, the 174-residue chain is MVDPQSPITPHLYPQAIQLKLYQAFIFSIPILFSIILFLLFYLFYLKRRASSLSSPSPMILPVSSSHQTSSHLPSVCLLDVKVELKDKLHVVLFNEELGTRDSLCCVCLGEFELKEELVEMPLCKHIFHLDCIHLWLYSHNTCPLCRSSVSISSTKTSVDDDNDHPDSPQTSPV.

An RING-type; atypical zinc finger spans residues cysteine 105–arginine 147. A disordered region spans residues threonine 155–valine 174.

As to expression, expressed in stems, flowers, cauline leaves and roots.

It carries out the reaction S-ubiquitinyl-[E2 ubiquitin-conjugating enzyme]-L-cysteine + [acceptor protein]-L-lysine = [E2 ubiquitin-conjugating enzyme]-L-cysteine + N(6)-ubiquitinyl-[acceptor protein]-L-lysine.. It functions in the pathway protein modification; protein ubiquitination. In terms of biological role, probable E3 ubiquitin-protein ligase that may possess E3 ubiquitin ligase activity in vitro. The sequence is that of Probable E3 ubiquitin-protein ligase RHA4A from Arabidopsis thaliana (Mouse-ear cress).